The primary structure comprises 33 residues: GILDTLKNLAISAAKGAAQGLVNKASCKLSGQC.

Residues Cys-27 and Cys-33 are joined by a disulfide bond.

This sequence belongs to the frog skin active peptide (FSAP) family. Brevinin subfamily. Expressed by the skin glands.

The protein resides in the secreted. In terms of biological role, shows antibacterial activity against representative Gram-negative and Gram-positive bacterial species, and hemolytic activity. The polypeptide is Brevinin-2Ea (Pelophylax lessonae (Pool frog)).